Consider the following 112-residue polypeptide: Transmembrane protein 14C (112 aa).

Helical transmembrane passes span 7–27 (VVPL…GGII), 32–52 (AGSV…SLGA), 62–82 (VWVF…RFYH), and 86–106 (FMPA…VGVS).

It belongs to the TMEM14 family.

It is found in the mitochondrion membrane. In terms of biological role, required for normal heme biosynthesis. This is Transmembrane protein 14C (TMEM14C) from Pongo abelii (Sumatran orangutan).